Here is a 366-residue protein sequence, read N- to C-terminus: Alanine racemase (366 aa).

Catalysis depends on Lys-40, which acts as the Proton acceptor; specific for D-alanine. Lys-40 is subject to N6-(pyridoxal phosphate)lysine. Arg-136 contacts substrate. The active-site Proton acceptor; specific for L-alanine is the Tyr-263. Met-310 lines the substrate pocket.

It belongs to the alanine racemase family. Pyridoxal 5'-phosphate is required as a cofactor.

The catalysed reaction is L-alanine = D-alanine. Its pathway is amino-acid biosynthesis; D-alanine biosynthesis; D-alanine from L-alanine: step 1/1. Catalyzes the interconversion of L-alanine and D-alanine. May also act on other amino acids. The protein is Alanine racemase (alr) of Streptococcus equi subsp. zooepidemicus (strain H70).